The chain runs to 183 residues: Peptidyl-tRNA hydrolase (183 aa).

Position 14 (Tyr14) interacts with tRNA. Catalysis depends on His19, which acts as the Proton acceptor. Positions 60 and 62 each coordinate tRNA.

This sequence belongs to the PTH family. Monomer.

The protein localises to the cytoplasm. The catalysed reaction is an N-acyl-L-alpha-aminoacyl-tRNA + H2O = an N-acyl-L-amino acid + a tRNA + H(+). Functionally, hydrolyzes ribosome-free peptidyl-tRNAs (with 1 or more amino acids incorporated), which drop off the ribosome during protein synthesis, or as a result of ribosome stalling. In terms of biological role, catalyzes the release of premature peptidyl moieties from peptidyl-tRNA molecules trapped in stalled 50S ribosomal subunits, and thus maintains levels of free tRNAs and 50S ribosomes. This Mycoplasmoides gallisepticum (strain R(low / passage 15 / clone 2)) (Mycoplasma gallisepticum) protein is Peptidyl-tRNA hydrolase.